Reading from the N-terminus, the 1406-residue chain is Inactive tyrosine-protein kinase PRAG1 (1406 aa).

Serine 148 carries the post-translational modification Phosphoserine. A compositionally biased stretch (basic and acidic residues) spans 184–193; that stretch reads EEKAVHKEKP. 2 disordered regions span residues 184 to 205 and 217 to 248; these read EEKA…STQE and TTSG…SGDS. Residues tyrosine 253, tyrosine 365, and tyrosine 413 each carry the phosphotyrosine modification. Disordered stretches follow at residues 372 to 470 and 484 to 854; these read PAPE…TPQV and DHRT…HSET. The segment covering 526-542 has biased composition (basic and acidic residues); that stretch reads RESHAHSASESKPKERP. The span at 546-576 shows a compositional bias: low complexity; that stretch reads PKLSKSSPVGSPVSPSAGGPPVSPLADLSDG. Polar residues-rich tracts occupy residues 660–671 and 678–695; these read NGPTDHSNSTTW and DGSS…SKSA. A phosphoserine mark is found at serine 696 and serine 745. Composition is skewed to polar residues over residues 737–746 and 754–770; these read SQGSAESLSP and SFTT…SRTC. Phosphoserine is present on serine 782. Positions 798–808 are enriched in polar residues; that stretch reads SGSTEDVSPSG. Serine 826 bears the Phosphoserine mark. Residues 933 to 976 form a required for homodimerization region; it reads STQLQLHGLLSNISSKEGTYAKLGGLYTQSLARLVAKCEDLFMG. A Protein kinase domain is found at 978–1329; the sequence is QKKELHFNEN…EAKRVLQCLL (352 aa). Positions 1163–1173 are enriched in pro residues; that stretch reads GPAPAPAPAPA. The tract at residues 1163–1206 is disordered; sequence GPAPAPAPAPAPAAAAPPCSSAAPPAGGTLSPAAGPASPEGPRE. A compositionally biased stretch (low complexity) spans 1174 to 1202; the sequence is PAAAAPPCSSAAPPAGGTLSPAAGPASPE. The required for homodimerization stretch occupies residues 1331 to 1406; it reads GPRRELVQQP…LQSLKLLQLL (76 aa).

This sequence belongs to the protein kinase superfamily. In terms of assembly, homodimer. Dimerization leads to the catalytic activation of CSK. Interacts (via C-terminus) with RND2. Interacts with CSK (via SH2 domain) in a Tyr-413 phosphorylation-dependent manner; this interaction potentiates kinase activity of CSK. Interacts with PEAK1. Interacts with NOTCH1 intracellular domain (N1ICD). Forms a complex with N1ICD and MAML1, in a MAML1-dependent manner. Post-translationally, phosphorylated by CSK on Tyr-253, Tyr-365, and Tyr-413; Tyr-413 is a primary site of phosphorylation.

It localises to the cytoplasm. The protein resides in the cell junction. Its subcellular location is the focal adhesion. It is found in the nucleus. In terms of biological role, catalytically inactive protein kinase that acts as a scaffold protein. Functions as an effector of the small GTPase RND2, which stimulates RhoA activity and inhibits NGF-induced neurite outgrowth. Promotes Src family kinase (SFK) signaling by regulating the subcellular localization of CSK, a negative regulator of these kinases, leading to the regulation of cell morphology and motility by a CSK-dependent mechanism. Acts as a critical coactivator of Notch signaling. The chain is Inactive tyrosine-protein kinase PRAG1 from Homo sapiens (Human).